The following is a 183-amino-acid chain: Large ribosomal subunit protein uL6 (183 aa).

It belongs to the universal ribosomal protein uL6 family. Part of the 50S ribosomal subunit.

Functionally, this protein binds to the 23S rRNA, and is important in its secondary structure. It is located near the subunit interface in the base of the L7/L12 stalk, and near the tRNA binding site of the peptidyltransferase center. This is Large ribosomal subunit protein uL6 from Methanococcus aeolicus (strain ATCC BAA-1280 / DSM 17508 / OCM 812 / Nankai-3).